Reading from the N-terminus, the 87-residue chain is Toxin Cll5c (87 aa).

A signal peptide spans 1-19; it reads MNSLLMITACLVLFGTVWA. The 66-residue stretch at 20–85 folds into the LCN-type CS-alpha/beta domain; it reads KEGYLVNKST…TYPLPNKSCS (66 aa). 4 disulfide bridges follow: C31-C84, C35-C60, C44-C65, and C48-C67. The propeptide at 86–87 is removed by a carboxypeptidase; it reads KK.

The protein belongs to the long (4 C-C) scorpion toxin superfamily. Sodium channel inhibitor family. Beta subfamily. In terms of tissue distribution, expressed by the venom gland.

The protein localises to the secreted. In terms of biological role, beta toxins bind voltage-independently at site-4 of sodium channels (Nav) and shift the voltage of activation toward more negative potentials thereby affecting sodium channel activation and promoting spontaneous and repetitive firing. This chain is Toxin Cll5c, found in Centruroides limpidus (Mexican scorpion).